We begin with the raw amino-acid sequence, 390 residues long: Phosphoglycerate kinase (390 aa).

Residues Asp-21–Asn-23, Arg-36, His-59–Arg-62, Arg-114, and Arg-147 contribute to the substrate site. ATP contacts are provided by residues Lys-198, Glu-314, and Gly-340–Thr-343.

It belongs to the phosphoglycerate kinase family. In terms of assembly, monomer.

It is found in the cytoplasm. It catalyses the reaction (2R)-3-phosphoglycerate + ATP = (2R)-3-phospho-glyceroyl phosphate + ADP. Its pathway is carbohydrate degradation; glycolysis; pyruvate from D-glyceraldehyde 3-phosphate: step 2/5. This chain is Phosphoglycerate kinase (pgk), found in Buchnera aphidicola subsp. Acyrthosiphon pisum (strain APS) (Acyrthosiphon pisum symbiotic bacterium).